The chain runs to 550 residues: Dipeptide-binding protein (550 aa).

The N-terminal stretch at 1–22 is a signal peptide; that stretch reads MKQAKIIGLSTVIALSGIILVA. The N-palmitoyl cysteine moiety is linked to residue Cys23. Cys23 carries S-diacylglycerol cysteine lipidation.

It belongs to the bacterial solute-binding protein 5 family. As to quaternary structure, the complex is composed of two ATP-binding proteins (DppD and DppF), two transmembrane proteins (DppB and DppC) and a solute-binding protein (DppA).

The protein resides in the cell membrane. Its function is as follows. Part of the ABC transporter DppABCDF involved in dipeptide transport. Binds di- and tripeptides with high affinity. Requires a free N-terminal alpha-amino group and an alpha-peptide bound contiguous with the N-terminal amino group, has a strong selectivity for L-residues, and shows preference for dipeptides containing methionine or arginine, followed by hydrophobic tripeptides consisting of leucine or valine residues. In Lactococcus lactis subsp. cremoris (strain MG1363), this protein is Dipeptide-binding protein.